The primary structure comprises 255 residues: Small ribosomal subunit protein eS1 (255 aa).

Position 2 is an N-acetylalanine; partial (alanine 2).

Belongs to the eukaryotic ribosomal protein eS1 family. In terms of assembly, component of the small ribosomal subunit. Mature ribosomes consist of a small (40S) and a large (60S) subunit. The 40S subunit contains about 33 different proteins and 1 molecule of RNA (18S). The 60S subunit contains about 49 different proteins and 3 molecules of RNA (25S, 5.8S and 5S).

It is found in the cytoplasm. The sequence is that of Small ribosomal subunit protein eS1 from Yarrowia lipolytica (strain CLIB 122 / E 150) (Yeast).